The sequence spans 476 residues: Cysteine--tRNA ligase (476 aa).

A Zn(2+)-binding site is contributed by Cys31. A 'HIGH' region motif is present at residues 33–43 (PTVYNYAHIGN). 3 residues coordinate Zn(2+): Cys211, His236, and Glu240. Residues 269–273 (KMSKS) carry the 'KMSKS' region motif. Lys272 contributes to the ATP binding site.

The protein belongs to the class-I aminoacyl-tRNA synthetase family. Monomer. Zn(2+) is required as a cofactor.

It is found in the cytoplasm. The catalysed reaction is tRNA(Cys) + L-cysteine + ATP = L-cysteinyl-tRNA(Cys) + AMP + diphosphate. This Xanthomonas oryzae pv. oryzae (strain MAFF 311018) protein is Cysteine--tRNA ligase.